The following is a 248-amino-acid chain: tRNA pseudouridine synthase A (248 aa).

Asp54 functions as the Nucleophile in the catalytic mechanism. Tyr112 provides a ligand contact to substrate.

It belongs to the tRNA pseudouridine synthase TruA family. Homodimer.

It catalyses the reaction uridine(38/39/40) in tRNA = pseudouridine(38/39/40) in tRNA. Functionally, formation of pseudouridine at positions 38, 39 and 40 in the anticodon stem and loop of transfer RNAs. This Geobacillus sp. (strain WCH70) protein is tRNA pseudouridine synthase A.